Consider the following 76-residue polypeptide: Acyl carrier protein (76 aa).

The Carrier domain maps to 1–76; the sequence is MDTFESVKAV…DVVAYIEANK (76 aa). Ser-36 carries the O-(pantetheine 4'-phosphoryl)serine modification.

The protein belongs to the acyl carrier protein (ACP) family. In terms of processing, 4'-phosphopantetheine is transferred from CoA to a specific serine of apo-ACP by AcpS. This modification is essential for activity because fatty acids are bound in thioester linkage to the sulfhydryl of the prosthetic group.

It is found in the cytoplasm. The protein operates within lipid metabolism; fatty acid biosynthesis. Carrier of the growing fatty acid chain in fatty acid biosynthesis. The chain is Acyl carrier protein from Helicobacter hepaticus (strain ATCC 51449 / 3B1).